The primary structure comprises 493 residues: MTEPLIFEKSKSGRKGYTLPKCDVPVQEVSELIPAQFLRKAKADLPEVQENEVVRHFVKLSTLNHHVDKGMYPLGSCTMKYNPKVNEVTSALPGFSALHPLQPQESVQGALKLMYELQEWLKEICGMKAVSLQPVAGAHGELTGILLIRKYHEKQGKPRKKILVPDSAHGTNPASSAIAGYMTVGVKTNARGLTDMDDLRAKLDEDVAALMLTNPNTLGIFESQILEISELLHANGSLLYMDGANMNALLGITRPGDMGFDVVHYNLHKTFSTPHGGGGPGSGPVGVSEKLVEFLPTPAIEKKESGEKTSYCLNYDLPDSIGKMSGFYGNFSIMVRAYTYLLMHGAKGLRAVSENAIINATYLLSRLRGKFDVPYDEQIMHEFCLSGERQKTNGVKTLDMAKRLLDFGFHAPTIYFPLIVKECMMIEPTESETKETLDDFADVMLRIAEEAESNPEMVLNAPHNTPVKRLDDAYASRNINIKYTPKEKETVEA.

The residue at position 269 (lysine 269) is an N6-(pyridoxal phosphate)lysine.

It belongs to the GcvP family. C-terminal subunit subfamily. As to quaternary structure, the glycine cleavage system is composed of four proteins: P, T, L and H. In this organism, the P 'protein' is a heterodimer of two subunits. Requires pyridoxal 5'-phosphate as cofactor.

The enzyme catalyses N(6)-[(R)-lipoyl]-L-lysyl-[glycine-cleavage complex H protein] + glycine + H(+) = N(6)-[(R)-S(8)-aminomethyldihydrolipoyl]-L-lysyl-[glycine-cleavage complex H protein] + CO2. In terms of biological role, the glycine cleavage system catalyzes the degradation of glycine. The P protein binds the alpha-amino group of glycine through its pyridoxal phosphate cofactor; CO(2) is released and the remaining methylamine moiety is then transferred to the lipoamide cofactor of the H protein. This Chloroherpeton thalassium (strain ATCC 35110 / GB-78) protein is Probable glycine dehydrogenase (decarboxylating) subunit 2.